A 174-amino-acid chain; its full sequence is Probable carboxylesterase Culp5 (174 aa).

S67 acts as the Nucleophile in catalysis. A disulfide bridge connects residues C137 and C144. D141 is an active-site residue. H153 acts as the Proton donor/acceptor in catalysis.

The protein belongs to the cutinase family.

Its function is as follows. Does not exhibit cutinase activity. The chain is Probable carboxylesterase Culp5 from Mycobacterium tuberculosis (strain ATCC 25618 / H37Rv).